Here is a 622-residue protein sequence, read N- to C-terminus: Chaperone protein HscA homolog (622 aa).

The protein belongs to the heat shock protein 70 family.

Its function is as follows. Chaperone involved in the maturation of iron-sulfur cluster-containing proteins. Has a low intrinsic ATPase activity which is markedly stimulated by HscB. The protein is Chaperone protein HscA homolog of Acidovorax sp. (strain JS42).